Reading from the N-terminus, the 4763-residue chain is Nonribosomal peptide synthetase sidC (4763 aa).

The tract at residues 1 to 24 (MAGTANPADEGLTGPTETTNHINS) is disordered. A compositionally biased stretch (polar residues) spans 15–24 (PTETTNHINS). The segment at 296-815 (STVAEHSTLT…SSGKVDRNSI (520 aa)) is adenylation 1. The Carrier 1 domain maps to 853 to 930 (EKALELRTLV…GLLTLILNGK (78 aa)). Serine 890 bears the O-(pantetheine 4'-phosphoryl)serine mark. A condensation 1 region spans residues 1003 to 1396 (TRSYIYHSVI…DIIAFILQNP (394 aa)). The interval 1398–1951 (GDFENALLYT…AKTDRRALQA (554 aa)) is adenylation 2. The region spanning 1979 to 2055 (LVASDAMEKI…DLARLCTSSS (77 aa)) is the Carrier 2 domain. An O-(pantetheine 4'-phosphoryl)serine modification is found at serine 2016. A condensation 2 region spans residues 2092–2423 (TPIQESLLSE…HIHAREVRRM (332 aa)). Residues 2556–3070 (ELNAREHPEW…MSGKANIKEL (515 aa)) are adenylation 3. Positions 3099 to 3175 (RPLSSDEEAV…QLAQLPRKST (77 aa)) constitute a Carrier 3 domain. Serine 3136 is subject to O-(pantetheine 4'-phosphoryl)serine. The interval 3217–3626 (PLQEGLVARS…DDIALDSFSL (410 aa)) is condensation 3. The Carrier 4 domain occupies 3647–3720 (SATETKIRDL…ALAEHVDERS (74 aa)). Serine 3681 bears the O-(pantetheine 4'-phosphoryl)serine mark. The segment at 3761–4093 (TPLQAGMITR…SLFDTLFVFQ (333 aa)) is condensation 4. A Carrier 5 domain is found at 4204 to 4277 (PAHESIIRDV…GISARIISPV (74 aa)). Serine 4238 is subject to O-(pantetheine 4'-phosphoryl)serine. Residues 4344-4593 (ERIDSGKLEE…PCLNVTPFTF (250 aa)) form a condensation 5 region.

This sequence belongs to the NRP synthetase family.

The protein operates within siderophore biosynthesis. Its function is as follows. Nonribosomal peptide synthase; part of the siderophore biosynthetic pathway. Aspergillus fumigatus produces four types of siderophores, low-molecular-mass iron chelators, including excreted fusarinine C (FsC) and triacetylfusarinine C (TAFC) for iron uptake; and intacellular ferricrocin (FC) for hyphal and hydroxyferricrocin (HFC) for conidial iron distribution and storage. TAFC consists of three N(2)-acetyl-N(5)-anhydromevalonyl-N(5)-hydroxyornithine residues cyclically linked by ester bonds; FC is a cyclic hexapeptide with the structure Gly-Ser-Gly-(N(5)-acetyl-N(5)-hydroxyornithine)x3. The biosynthesis of all four siderophores depends on the hydroxylation of ornithine, catalyzed by the monooxygenase sidA. Subsequently, the pathways for biosynthesis of extra- and intracellular siderophores split. For biosynthesis of extracellular siderophores, the transacylase sidF transfers anhydromevalonyl to N(5)-hydroxyornithine. The required anhydromevalonyl-CoA moiety is derived from mevalonate by CoA ligation and dehydration catalyzed by sidI and sidH respectively. The acetylation of N(5)-hydroxyornithine for FC biosynthesis involves the constitutively expressed sidL. FC is hydroxylated to HFC by an as yet uncharacterized enzyme during conidiation. Assembly of fusarinine C (FsC) and FC is catalyzed by two different nonribosomal peptide synthetases (NRPS), sidD and sidC respectively. Subsequently, sidG catalyzes N2-acetylation of FsC for forming TAFC. Both extra- and intracellular siderophores are crucial for growth during iron limitation and virulence. The chain is Nonribosomal peptide synthetase sidC from Aspergillus fumigatus (strain ATCC MYA-4609 / CBS 101355 / FGSC A1100 / Af293) (Neosartorya fumigata).